The chain runs to 874 residues: Mannuronan C5-epimerase AlgE6 (874 aa).

PbH1 repeat units lie at residues 133 to 155 (DRNV…DPHE), 157 to 179 (TINL…VADY), 180 to 202 (QIGG…NIVT), 204 to 226 (TNDF…VVQR), 234 to 256 (PENI…LVKM), 257 to 279 (SNNV…RVYG), 280 to 302 (AQGV…APEV), and 320 to 351 (TLNT…DFSS). Hemolysin-type calcium-binding repeat units follow at residues 383–394 (GTDGNDVLIGSD), 401–417 (GGAG…DDLL), 419–435 (GGAG…ADTF), 562–578 (GGGG…GDLL), 580–596 (GGAG…ADTF), 723–739 (GGGG…NDLL), and 741–757 (GGAG…ADTF). Positions 401–420 (GGAGDDRLDGGAGDDLLDGG) are disordered.

This sequence belongs to the D-mannuronate C5-epimerase family. Ca(2+) serves as cofactor.

The protein localises to the secreted. It carries out the reaction [(1-&gt;4)-beta-D-mannuronosyl](n) = [alginate](n). The protein operates within glycan biosynthesis; alginate biosynthesis. Its activity is regulated as follows. Inhibited by zinc. Its function is as follows. Converts beta-D-mannuronic acid (M) to alpha-L-guluronic acid (G), producing a polymer with gel-forming capacity, required for the formation of the cyst coat. The sequence is that of Mannuronan C5-epimerase AlgE6 from Azotobacter vinelandii.